A 270-amino-acid polypeptide reads, in one-letter code: Shikimate dehydrogenase (NADP(+)) (270 aa).

Residues 15-17 and T62 contribute to the shikimate site; that span reads SKS. The active-site Proton acceptor is K66. D78 contacts NADP(+). Shikimate is bound by residues N87 and D103. Residues 128–132, 152–157, and L213 contribute to the NADP(+) site; these read GAGGA and NRTVDR. Shikimate is bound at residue Y215. G237 is a binding site for NADP(+).

This sequence belongs to the shikimate dehydrogenase family. Homodimer.

The catalysed reaction is shikimate + NADP(+) = 3-dehydroshikimate + NADPH + H(+). It participates in metabolic intermediate biosynthesis; chorismate biosynthesis; chorismate from D-erythrose 4-phosphate and phosphoenolpyruvate: step 4/7. Involved in the biosynthesis of the chorismate, which leads to the biosynthesis of aromatic amino acids. Catalyzes the reversible NADPH linked reduction of 3-dehydroshikimate (DHSA) to yield shikimate (SA). In Halorhodospira halophila (strain DSM 244 / SL1) (Ectothiorhodospira halophila (strain DSM 244 / SL1)), this protein is Shikimate dehydrogenase (NADP(+)).